Here is an 874-residue protein sequence, read N- to C-terminus: Isopimaradiene synthase, chloroplastic (874 aa).

The span at 1–12 (MALPSSSLSSRI) shows a compositional bias: polar residues. The disordered stretch occupies residues 1–20 (MALPSSSLSSRIPTGPHPLT). Residues 1 to 37 (MALPSSSLSSRIPTGPHPLTHTQCIPHFSTTINAGIS) constitute a chloroplast transit peptide. Residues D407, D409, D626, D630, N770, and E778 each contribute to the Mg(2+) site. The short motif at 407–410 (DIDD) is the DXDD motif element. The short motif at 626–630 (DDLYD) is the DDXXD motif element.

The protein belongs to the terpene synthase family. Tpsd subfamily. Mg(2+) serves as cofactor. It depends on Mn(2+) as a cofactor.

It localises to the plastid. The protein localises to the chloroplast. The enzyme catalyses (+)-copalyl diphosphate = isopimara-8(14),15-diene + diphosphate. The protein operates within terpene metabolism; oleoresin biosynthesis. Functionally, terpene synthase (TPS) involved in the biosynthesis of diterpene natural products included in conifer oleoresin secretions and volatile emissions; these compounds contribute to biotic and abiotic stress defense against herbivores and pathogens. Catalyzes the conversion of (+)-copalyl diphosphate ((+)-CPP) to isopimaradiene. The polypeptide is Isopimaradiene synthase, chloroplastic (Picea sitchensis (Sitka spruce)).